The primary structure comprises 369 residues: Biglycan (369 aa).

Positions 1 to 16 (MWPLWLVASLLALSQA) are cleaved as a signal peptide. Positions 17–37 (LPFEQKGFWDFTLDDGLPMLN) are excised as a propeptide. Serine 42 and serine 48 each carry an O-linked (Xyl...) (glycosaminoglycan) serine glycan. 2 cysteine pairs are disulfide-bonded: cysteine 64–cysteine 70 and cysteine 68–cysteine 77. LRR repeat units follow at residues 83-103 (KAVPKEISPDTMLLDLQNNDI), 104-127 (SELRADDFKGLHHLYALVLVNNKI), 128-151 (SKIHEKAFSPLRKLQKLYISKNHL), 152-172 (VEIPPNLPSSLVELRIHDNRI), 173-196 (RKVPKGVFSGLRNMNCIEMGGNPL), 197-221 (ENSGFEPGAFDGLKLNYLRISEAKL), 222-242 (TGIPKDLPETLNELHLDHNKI), 243-266 (QAIELEDLLRYSKLYRLGLGHNQI), 267-290 (RMIENGSLSFLPTLRELHLDNNKL), 291-313 (SRVPSGLPDLKLLQVVYLHTNNI), 314-343 (TKVGVNDFCPVGFGVKRAYYNGISLFNNPV), and 344-369 (PYWEVQPATFRCVTDRLAIQFGNYKK). Asparagine 271 and asparagine 312 each carry an N-linked (GlcNAc...) asparagine glycan. An intrachain disulfide couples cysteine 322 to cysteine 355.

Belongs to the small leucine-rich proteoglycan (SLRP) family. SLRP class I subfamily. In terms of assembly, homodimer. Forms a ternary complex with MFAP2 and ELN. Post-translationally, the two attached glycosaminoglycan chains can be either chondroitin sulfate or dermatan sulfate.

The protein resides in the secreted. It is found in the extracellular space. Its subcellular location is the extracellular matrix. Functionally, may be involved in collagen fiber assembly. This is Biglycan (BGN) from Canis lupus familiaris (Dog).